A 235-amino-acid polypeptide reads, in one-letter code: Sugar fermentation stimulation protein homolog (235 aa).

The protein belongs to the SfsA family.

The sequence is that of Sugar fermentation stimulation protein homolog from Roseobacter denitrificans (strain ATCC 33942 / OCh 114) (Erythrobacter sp. (strain OCh 114)).